A 260-amino-acid chain; its full sequence is Small ribosomal subunit protein bS6 (260 aa).

It belongs to the bacterial ribosomal protein bS6 family.

Binds together with bS18 to 16S ribosomal RNA. The polypeptide is Small ribosomal subunit protein bS6 (Wolbachia sp. subsp. Brugia malayi (strain TRS)).